A 94-amino-acid polypeptide reads, in one-letter code: Co-chaperonin GroES (94 aa).

The protein belongs to the GroES chaperonin family. In terms of assembly, heptamer of 7 subunits arranged in a ring. Interacts with the chaperonin GroEL.

Its subcellular location is the cytoplasm. In terms of biological role, together with the chaperonin GroEL, plays an essential role in assisting protein folding. The GroEL-GroES system forms a nano-cage that allows encapsulation of the non-native substrate proteins and provides a physical environment optimized to promote and accelerate protein folding. GroES binds to the apical surface of the GroEL ring, thereby capping the opening of the GroEL channel. The protein is Co-chaperonin GroES of Anoxybacillus flavithermus (strain DSM 21510 / WK1).